Consider the following 588-residue polypeptide: Zeta-carotene desaturase, chloroplastic/chromoplastic (588 aa).

This sequence belongs to the zeta carotene desaturase family. Requires NAD(+) as cofactor. NADP(+) is required as a cofactor. It depends on FAD as a cofactor.

The protein resides in the plastid. Its subcellular location is the chloroplast. It localises to the chromoplast. The enzyme catalyses 9,9'-di-cis-zeta-carotene + 2 a quinone = 7,7',9,9'-tetra-cis-lycopene + 2 a quinol. It participates in carotenoid biosynthesis; lycopene biosynthesis. In terms of biological role, catalyzes the conversion of zeta-carotene to lycopene via the intermediary of neurosporene. It carries out two consecutive desaturations (introduction of double bonds) at positions C-7 and C-7'. In Solanum lycopersicum (Tomato), this protein is Zeta-carotene desaturase, chloroplastic/chromoplastic (ZDS).